We begin with the raw amino-acid sequence, 267 residues long: Phosphoinositide-3-kinase-interacting protein 1 (267 aa).

The N-terminal stretch at M1–G21 is a signal peptide. The Extracellular segment spans residues S22–T172. The 78-residue stretch at G24–C101 folds into the Kringle domain. 3 cysteine pairs are disulfide-bonded: C25/C101, C46/C82, and C70/C96. Over residues P91–C101 the composition is skewed to basic and acidic residues. The segment at P91–E122 is disordered. Residues L173–V193 traverse the membrane as a helical segment. The Cytoplasmic segment spans residues L194–A267.

It is found in the cell membrane. Its function is as follows. Negative regulator of hepatic phosphatidylinositol 3-kinase (PI3K) activity. This Rattus norvegicus (Rat) protein is Phosphoinositide-3-kinase-interacting protein 1 (Pik3ip1).